A 459-amino-acid chain; its full sequence is Putrescine aminotransferase (459 aa).

Pyridoxal 5'-phosphate is bound by residues 150 to 151 and Gln-274; that span reads GT. Residue Lys-300 is modified to N6-(pyridoxal phosphate)lysine. Thr-332 lines the pyridoxal 5'-phosphate pocket.

It belongs to the class-III pyridoxal-phosphate-dependent aminotransferase family. Putrescine aminotransferase subfamily. Requires pyridoxal 5'-phosphate as cofactor.

It carries out the reaction an alkane-alpha,omega-diamine + 2-oxoglutarate = an omega-aminoaldehyde + L-glutamate. The enzyme catalyses putrescine + 2-oxoglutarate = 1-pyrroline + L-glutamate + H2O. The catalysed reaction is cadaverine + 2-oxoglutarate = 5-aminopentanal + L-glutamate. It functions in the pathway amine and polyamine degradation; putrescine degradation; 4-aminobutanal from putrescine (transaminase route): step 1/1. In terms of biological role, catalyzes the aminotransferase reaction from putrescine to 2-oxoglutarate, leading to glutamate and 4-aminobutanal, which spontaneously cyclizes to form 1-pyrroline. This is the first step in one of two pathways for putrescine degradation, where putrescine is converted into 4-aminobutanoate (gamma-aminobutyrate or GABA) via 4-aminobutanal. Also functions as a cadaverine transaminase in a a L-lysine degradation pathway to succinate that proceeds via cadaverine, glutarate and L-2-hydroxyglutarate. In Escherichia coli (strain SMS-3-5 / SECEC), this protein is Putrescine aminotransferase.